We begin with the raw amino-acid sequence, 67 residues long: DNA-directed RNA polymerase subunit Rpo10 (67 aa).

The Zn(2+) site is built by Cys7, Cys10, Cys44, and Cys45.

This sequence belongs to the archaeal Rpo10/eukaryotic RPB10 RNA polymerase subunit family. As to quaternary structure, part of the RNA polymerase complex. Requires Zn(2+) as cofactor.

Its subcellular location is the cytoplasm. It catalyses the reaction RNA(n) + a ribonucleoside 5'-triphosphate = RNA(n+1) + diphosphate. DNA-dependent RNA polymerase (RNAP) catalyzes the transcription of DNA into RNA using the four ribonucleoside triphosphates as substrates. This chain is DNA-directed RNA polymerase subunit Rpo10, found in Caldivirga maquilingensis (strain ATCC 700844 / DSM 13496 / JCM 10307 / IC-167).